Here is a 244-residue protein sequence, read N- to C-terminus: Transcriptional activator protein PhzR (244 aa).

One can recognise an HTH luxR-type domain in the interval 177-242; the sequence is AFNTDVEFSE…QAVSYAVALG (66 aa). The segment at residues 201-220 is a DNA-binding region (H-T-H motif); the sequence is SEEIGVIMGVCTDTVNYHHR.

Belongs to the autoinducer-regulated transcriptional regulatory protein family.

Positive regulator of phenazine antibiotic production. May activate the phenazine biosynthetic genes by binding to a DNA sequence upstream of them, or to an intermediate gene which, in turn, interacts with them. This Pseudomonas fluorescens protein is Transcriptional activator protein PhzR (phzR).